The following is a 504-amino-acid chain: Sodium-coupled neutral amino acid symporter 2 (504 aa).

Residues 1 to 28 (MNKAPAQMSRFNIAPDMDSSSTNSNEYT) form a disordered region. At 1–79 (MNKAPAQMSR…SPGSASFGMS (79 aa)) the chain is on the cytoplasmic side. Positions 1–99 (MNKAPAQMSR…SGILGLSYAM (99 aa)) are regulates protein turnover upon amino acid deprivation. The span at 19-28 (SSSTNSNEYT) shows a compositional bias: low complexity. The chain crosses the membrane as a helical span at residues 80–99 (VFNLGNAIMGSGILGLSYAM). Asn85 lines the Na(+) pocket. The Extracellular segment spans residues 100-105 (ANTGIA). The chain crosses the membrane as a helical span at residues 106–126 (MFVILLVAVAIFSLYSVHLLL). The Cytoplasmic portion of the chain corresponds to 127–161 (KTANEGGSLVYEQLGYKAFGIPGKLAASCSITMQN). The helical transmembrane segment at 162–180 (FGAMASYLYIVKYELPIVI) threads the bilayer. Over 181-189 (RAFLDSNDN) the chain is Extracellular. Residues 190–210 (AWYTNGDYLVLIVTMSIILPL) form a helical membrane-spanning segment. The Cytoplasmic segment spans residues 211–218 (SLLKNLGY). Residues 219–239 (LGYTSGFSLLCMVFFLIVVIY) form a helical membrane-spanning segment. At 240–285 (KKFQIPCPLPENFINITVNVSQPPQTNNSTDEECCKPKYFIFNSQT) the chain is on the extracellular side. Residues Cys246 and Cys274 are joined by a disulfide bond. 2 N-linked (GlcNAc...) asparagine glycosylation sites follow: Asn254 and Asn258. A helical transmembrane segment spans residues 286–306 (VYAVPILTFAFVCHPAILPMY). Over 307–322 (EELKDRSRRKMQNVAN) the chain is Cytoplasmic. Residues 323-343 (VSFLGMFIMYLLAALFGYLTF) traverse the membrane as a helical segment. The Extracellular segment spans residues 344-364 (NEAVEPELLHTYSKVYNFDVV). The chain crosses the membrane as a helical span at residues 365–385 (LLIVRLAVLTAVTLTVPVVLF). Position 379 (Thr379) interacts with Na(+). Topologically, residues 386 to 406 (PIRTSVNHLLGASKEFSWPRH) are cytoplasmic. Residues 407 to 427 (ICITVALLVCVNILVIFVPTI) traverse the membrane as a helical segment. Residues 428–429 (RD) are Extracellular-facing. A helical membrane pass occupies residues 430 to 450 (IFGFIGASAAAMLIFILPSAF). At 451–465 (YIKLVKKESMKSVQK) the chain is on the cytoplasmic side. Residues 466–488 (IGATLFLIMGFLVMTGSMALIIM) form a helical membrane-spanning segment. Topologically, residues 489–504 (DWIHNALSSEEHTGGH) are extracellular.

It belongs to the amino acid/polyamine transporter 2 family.

Its subcellular location is the cell membrane. The catalysed reaction is L-alanine(in) + Na(+)(in) = L-alanine(out) + Na(+)(out). It catalyses the reaction glycine(in) + Na(+)(in) = glycine(out) + Na(+)(out). It carries out the reaction L-serine(in) + Na(+)(in) = L-serine(out) + Na(+)(out). The enzyme catalyses L-proline(in) + Na(+)(in) = L-proline(out) + Na(+)(out). The catalysed reaction is L-methionine(in) + Na(+)(in) = L-methionine(out) + Na(+)(out). It catalyses the reaction L-histidine(in) + Na(+)(in) = L-histidine(out) + Na(+)(out). It carries out the reaction L-asparagine(in) + Na(+)(in) = L-asparagine(out) + Na(+)(out). The enzyme catalyses L-glutamine(in) + Na(+)(in) = L-glutamine(out) + Na(+)(out). The catalysed reaction is L-threonine(in) + Na(+)(in) = L-threonine(out) + Na(+)(out). It catalyses the reaction L-leucine(in) + Na(+)(in) = L-leucine(out) + Na(+)(out). It carries out the reaction L-phenylalanine(in) + Na(+)(in) = L-phenylalanine(out) + Na(+)(out). With respect to regulation, inhibited by N-methyl-D-glucamine. Inhibited by choline. Allosteric regulation of sodium ions binding by pH. In terms of biological role, symporter that cotransports neutral amino acids and sodium ions from the extracellular to the intracellular side of the cell membrane. The transport is pH-sensitive, Li(+)-intolerant, electrogenic, driven by the Na(+) electrochemical gradient and cotransports of neutral amino acids and sodium ions with a stoichiometry of 1:1. This Danio rerio (Zebrafish) protein is Sodium-coupled neutral amino acid symporter 2.